The sequence spans 404 residues: Argininosuccinate synthase (404 aa).

Residues 11 to 19 and A38 contribute to the ATP site; that span reads AYSGGLDTS. Residues Y91 and S96 each coordinate L-citrulline. G121 is an ATP binding site. Positions 123, 127, and 128 each coordinate L-aspartate. N127 contributes to the L-citrulline binding site. L-citrulline-binding residues include R131, S181, S190, E266, and Y278.

This sequence belongs to the argininosuccinate synthase family. Type 1 subfamily. As to quaternary structure, homotetramer.

It localises to the cytoplasm. It carries out the reaction L-citrulline + L-aspartate + ATP = 2-(N(omega)-L-arginino)succinate + AMP + diphosphate + H(+). The protein operates within amino-acid biosynthesis; L-arginine biosynthesis; L-arginine from L-ornithine and carbamoyl phosphate: step 2/3. This chain is Argininosuccinate synthase, found in Sulfurimonas denitrificans (strain ATCC 33889 / DSM 1251) (Thiomicrospira denitrificans (strain ATCC 33889 / DSM 1251)).